The primary structure comprises 205 residues: SCO2-like protein RC0895 (205 aa).

Residues Cys82, Cys86, and His172 each coordinate Cu cation.

Belongs to the SCO1/2 family.

The chain is SCO2-like protein RC0895 from Rickettsia conorii (strain ATCC VR-613 / Malish 7).